The following is a 239-amino-acid chain: Phosphoribosylaminoimidazole-succinocarboxamide synthase (239 aa).

Belongs to the SAICAR synthetase family.

The catalysed reaction is 5-amino-1-(5-phospho-D-ribosyl)imidazole-4-carboxylate + L-aspartate + ATP = (2S)-2-[5-amino-1-(5-phospho-beta-D-ribosyl)imidazole-4-carboxamido]succinate + ADP + phosphate + 2 H(+). Its pathway is purine metabolism; IMP biosynthesis via de novo pathway; 5-amino-1-(5-phospho-D-ribosyl)imidazole-4-carboxamide from 5-amino-1-(5-phospho-D-ribosyl)imidazole-4-carboxylate: step 1/2. This Brevibacillus brevis (strain 47 / JCM 6285 / NBRC 100599) protein is Phosphoribosylaminoimidazole-succinocarboxamide synthase.